The following is a 435-amino-acid chain: Serine--tRNA ligase (435 aa).

242–244 (TAE) is a binding site for L-serine. Residue 273 to 275 (RSE) participates in ATP binding. E296 contacts L-serine. 360–363 (EISS) serves as a coordination point for ATP. L-serine is bound at residue S396.

It belongs to the class-II aminoacyl-tRNA synthetase family. Type-1 seryl-tRNA synthetase subfamily. Homodimer. The tRNA molecule binds across the dimer.

It is found in the cytoplasm. It catalyses the reaction tRNA(Ser) + L-serine + ATP = L-seryl-tRNA(Ser) + AMP + diphosphate + H(+). The catalysed reaction is tRNA(Sec) + L-serine + ATP = L-seryl-tRNA(Sec) + AMP + diphosphate + H(+). Its pathway is aminoacyl-tRNA biosynthesis; selenocysteinyl-tRNA(Sec) biosynthesis; L-seryl-tRNA(Sec) from L-serine and tRNA(Sec): step 1/1. Catalyzes the attachment of serine to tRNA(Ser). Is also able to aminoacylate tRNA(Sec) with serine, to form the misacylated tRNA L-seryl-tRNA(Sec), which will be further converted into selenocysteinyl-tRNA(Sec). The protein is Serine--tRNA ligase of Vibrio vulnificus (strain YJ016).